A 112-amino-acid polypeptide reads, in one-letter code: Putative pterin-4-alpha-carbinolamine dehydratase (112 aa).

It belongs to the pterin-4-alpha-carbinolamine dehydratase family.

It catalyses the reaction (4aS,6R)-4a-hydroxy-L-erythro-5,6,7,8-tetrahydrobiopterin = (6R)-L-erythro-6,7-dihydrobiopterin + H2O. The sequence is that of Putative pterin-4-alpha-carbinolamine dehydratase from Syntrophotalea carbinolica (strain DSM 2380 / NBRC 103641 / GraBd1) (Pelobacter carbinolicus).